Here is a 145-residue protein sequence, read N- to C-terminus: Putative sterol 14-demethylase-like protein (145 aa).

Residues 5–25 traverse the membrane as a helical segment; it reads YYTLLKTSVAIIIVFVVAKLI.

It belongs to the cytochrome P450 family. Expressed specifically in roots.

The protein resides in the membrane. In Arabidopsis thaliana (Mouse-ear cress), this protein is Putative sterol 14-demethylase-like protein (CYP51G2).